A 61-amino-acid polypeptide reads, in one-letter code: Small ribosomal subunit protein uS14 (61 aa).

Cys24, Cys27, Cys40, and Cys43 together coordinate Zn(2+).

This sequence belongs to the universal ribosomal protein uS14 family. Zinc-binding uS14 subfamily. Part of the 30S ribosomal subunit. Contacts proteins S3 and S10. The cofactor is Zn(2+).

Its function is as follows. Binds 16S rRNA, required for the assembly of 30S particles and may also be responsible for determining the conformation of the 16S rRNA at the A site. The chain is Small ribosomal subunit protein uS14 from Heliobacterium modesticaldum (strain ATCC 51547 / Ice1).